The chain runs to 431 residues: Serine--tRNA ligase (431 aa).

Position 235-237 (235-237) interacts with L-serine; sequence TAE. Residues 266-268 and Val-282 each bind ATP; that span reads RRE. Glu-289 contacts L-serine. 353–356 serves as a coordination point for ATP; the sequence is EASS. Ser-389 serves as a coordination point for L-serine.

It belongs to the class-II aminoacyl-tRNA synthetase family. Type-1 seryl-tRNA synthetase subfamily. As to quaternary structure, homodimer. The tRNA molecule binds across the dimer.

Its subcellular location is the cytoplasm. It carries out the reaction tRNA(Ser) + L-serine + ATP = L-seryl-tRNA(Ser) + AMP + diphosphate + H(+). It catalyses the reaction tRNA(Sec) + L-serine + ATP = L-seryl-tRNA(Sec) + AMP + diphosphate + H(+). It participates in aminoacyl-tRNA biosynthesis; selenocysteinyl-tRNA(Sec) biosynthesis; L-seryl-tRNA(Sec) from L-serine and tRNA(Sec): step 1/1. Catalyzes the attachment of serine to tRNA(Ser). Is also able to aminoacylate tRNA(Sec) with serine, to form the misacylated tRNA L-seryl-tRNA(Sec), which will be further converted into selenocysteinyl-tRNA(Sec). The protein is Serine--tRNA ligase of Chlorobium phaeobacteroides (strain DSM 266 / SMG 266 / 2430).